The sequence spans 359 residues: MSFEDSLEGLCEKFRILKQQLSDPESLGVQAFVVASREYSDLLPIMSLIEEYQTAQKEIEELEGLINSTDTDAELVHLAREELYTKQKLIPKLKHQLQLSLLPKDKDDSRSAILEIRAGTGGEEAALFVCDLYRMYIKYAERKSWKVEPIGISTTGIGGYKEASLCIGGKDVFARLKFESGVHRVQRVPETESSGRLHTSAATVAVLPEVEEVDLKIDEKDLRIDVYRSSGPGGQSVNTTDSAVRITHIPTGIVVIQQDEKSQHKNKSKALKVLRARLYNLEKQKIEDEISKMRKSQIGSGDRSERIRTYNFLQSRITDHRINMTLYRLEHIMKEGDLDEFVDALIADDQANKLQQISS.

Q235 carries the post-translational modification N5-methylglutamine.

It belongs to the prokaryotic/mitochondrial release factor family. Methylated by PrmC. Methylation increases the termination efficiency of RF1.

The protein resides in the cytoplasm. Functionally, peptide chain release factor 1 directs the termination of translation in response to the peptide chain termination codons UAG and UAA. In Anaplasma marginale (strain Florida), this protein is Peptide chain release factor 1.